A 102-amino-acid chain; its full sequence is Large ribosomal subunit protein bL21 (102 aa).

This sequence belongs to the bacterial ribosomal protein bL21 family. As to quaternary structure, part of the 50S ribosomal subunit. Contacts protein L20.

Functionally, this protein binds to 23S rRNA in the presence of protein L20. The polypeptide is Large ribosomal subunit protein bL21 (Geobacillus sp. (strain WCH70)).